A 204-amino-acid polypeptide reads, in one-letter code: Inner membrane-spanning protein YciB (204 aa).

5 helical membrane-spanning segments follow: residues 48-68 (ILFA…LYFF), 73-93 (FESM…ATLM), 102-122 (WKPT…QLFT), 147-167 (GAWI…AYAF), and 170-190 (AVWV…FVVG).

Belongs to the YciB family.

The protein resides in the cell inner membrane. In terms of biological role, plays a role in cell envelope biogenesis, maintenance of cell envelope integrity and membrane homeostasis. The sequence is that of Inner membrane-spanning protein YciB from Nitrosococcus oceani (strain ATCC 19707 / BCRC 17464 / JCM 30415 / NCIMB 11848 / C-107).